We begin with the raw amino-acid sequence, 210 residues long: MGKSAVIFVERATPATLTELKDALSNSILSVRDPWSIDFRTYRCSIKNLPADVSKLMYSITFHHHGRQTVLIKDNSAMVTTAAAADIPPALVFNGSSTGVPESIDTILSSKLSNIWMQRQLIKGDAGETLILDGLTVRLVNLFSSTGFKGLLIELQADEAGEFETKIAGIEGHLAEIRAKEYKTSSDSLGPDTSNEICDLAYQYVRALEL.

The protein belongs to the Mediator complex subunit 20 family. In terms of assembly, component of the Mediator complex, which is composed of at least 21 subunits that form three structurally distinct submodules. The Mediator head module contains MED6, MED8, MED11, SRB4/MED17, SRB5/MED18, ROX3/MED19, SRB2/MED20 and SRB6/MED22, the middle module contains MED1, MED4, NUT1/MED5, MED7, CSE2/MED9, NUT2/MED10, SRB7/MED21 and SOH1/MED31, and the tail module contains MED2, PGD1/MED3, RGR1/MED14, GAL11/MED15 and SIN4/MED16. The head and the middle modules interact directly with RNA polymerase II, whereas the elongated tail module interacts with gene-specific regulatory proteins. MED1 interacts directly with MED4 and MED7. SRB2/MED20 interacts directly with SRB4/MED17 and SRB5/MED18.

The protein localises to the nucleus. Functionally, component of the Mediator complex, a coactivator involved in the regulated transcription of nearly all RNA polymerase II-dependent genes. Mediator functions as a bridge to convey information from gene-specific regulatory proteins to the basal RNA polymerase II transcription machinery. The Mediator complex, having a compact conformation in its free form, is recruited to promoters by direct interactions with regulatory proteins and serves for the assembly of a functional preinitiation complex with RNA polymerase II and the general transcription factors. The Mediator complex unfolds to an extended conformation and partially surrounds RNA polymerase II, specifically interacting with the unphosphorylated form of the C-terminal domain (CTD) of RNA polymerase II. The Mediator complex dissociates from the RNA polymerase II holoenzyme and stays at the promoter when transcriptional elongation begins. The chain is Mediator of RNA polymerase II transcription subunit 20 (SRB2) from Saccharomyces cerevisiae (strain ATCC 204508 / S288c) (Baker's yeast).